Reading from the N-terminus, the 379-residue chain is Histone-lysine N-methyltransferase ATXR5 (379 aa).

Residues 1-15 (MATWNASSPAASPCS) show a composition bias toward low complexity. A disordered region spans residues 1 to 42 (MATWNASSPAASPCSSRRRTKAPARRPSSESPPPRKMKSMAE). The transit peptide at 1-44 (MATWNASSPAASPCSSRRRTKAPARRPSSESPPPRKMKSMAEIM) directs the protein to the chloroplast. The PHD-type zinc-finger motif lies at 64-114 (NVTCEKCGSGEGDDELLLCDKCDRGFHMKCLRPIVVRVPIGTWLCVDCSDQ). A PIP motif motif is present at residues 122–129 (QKKILHFF). Methionine 221 lines the substrate pocket. The SET domain maps to 245–367 (PPLVVVFDPL…KGERLYYDYN (123 aa)). Residues 255 to 257 (EGY) and 317 to 321 (RFING) each bind S-adenosyl-L-methionine. Arginine 339 serves as a coordination point for substrate. Tyrosine 366 contacts S-adenosyl-L-methionine. 369–370 (YE) lines the substrate pocket. Position 373 (tyrosine 373) interacts with S-adenosyl-L-methionine.

This sequence belongs to the class V-like SAM-binding methyltransferase superfamily. Histone-lysine methyltransferase family. TRX/MLL subfamily. Isoform 1 but not isoform 2 interacts with PCNA1 and PCNA2. Interacts (via PHD domain) with HTR1 (via N-terminus). Isoform 2 interacts with IPS1. As to expression, expressed in leaves, roots, stems, flowers, siliques and developing pollen. Up-regulated in tissues where cell division is active.

It localises to the nucleus. The protein localises to the plastid. The protein resides in the chloroplast. The enzyme catalyses L-lysyl(27)-[histone H3] + S-adenosyl-L-methionine = N(6)-methyl-L-lysyl(27)-[histone H3] + S-adenosyl-L-homocysteine + H(+). Histone methyltransferase that specifically monomethylates 'Lys-27' of histone H3 (H3K27me1). Has much higher activity on nucleosomes containing H3.1 than H3.3. Involved in the formation of constitutive heterochromatin and the silencing of heterochromatic elements. Influences which sets of rRNA gene variants are expressed or silenced. The chain is Histone-lysine N-methyltransferase ATXR5 (ATXR5) from Arabidopsis thaliana (Mouse-ear cress).